The sequence spans 144 residues: Protein cornichon homolog 1 (144 aa).

Topologically, residues 1-10 are cytoplasmic; that stretch reads MAFTFAAFCY. A helical membrane pass occupies residues 11-31; it reads MLALLLTATLIFFAIWHIIAF. The Lumenal segment spans residues 32–56; the sequence is DELKTDYKNPIDQCNTLNPLVLPEY. A helical membrane pass occupies residues 57-77; it reads LIHAFFCVMFLCAAEWLTLGL. Residues 78 to 122 lie on the Cytoplasmic side of the membrane; it reads NMPLLAYHIWRYMSRPVMSGPGLYDPTTIMNADILAYCQKEGWCK. The helical transmembrane segment at 123 to 143 threads the bilayer; that stretch reads LAFYLLAFFYYLYGMIYVLVS. Residue S144 is a topological domain, lumenal.

Belongs to the cornichon family. In terms of assembly, interacts with AREG immature precursor and with immature TGFA, i.e. with a prosegment and lacking full N-glycosylation, but not with the fully N-glycosylated form. In the Golgi apparatus, may form a complex with GORASP55 and transmembrane TGFA.

It is found in the endoplasmic reticulum membrane. Its subcellular location is the golgi apparatus membrane. Its function is as follows. Involved in the selective transport and maturation of TGF-alpha family proteins. The protein is Protein cornichon homolog 1 (CNIH1) of Pongo abelii (Sumatran orangutan).